A 595-amino-acid chain; its full sequence is Sucrose transport protein SUT4 (595 aa).

Over 1–61 (MDSAAGGGGL…PAARTTTTRK (61 aa)) the chain is Cytoplasmic. Residues 29–55 (SLNGGTPRGGSPKDPDATHQQGPPAAR) are disordered. Residues 62–82 (LVLACMVAAGVQFGWALQLSL) traverse the membrane as a helical segment. Over 83–97 (LTPYIQTLGIDHAMA) the chain is Extracellular. A helical transmembrane segment spans residues 98–118 (SFIWLCGPITGFVVQPCVGVW). The Cytoplasmic portion of the chain corresponds to 119–130 (SDKCRSKYGRRR). Residues 131–151 (PFILAGCLMICFAVTLIGFSA) traverse the membrane as a helical segment. Residues 152–173 (DLGYILGDTTEHCSTYKGSRFR) lie on the Extracellular side of the membrane. A helical transmembrane segment spans residues 174–194 (AAIIFVLGFWMLDLANNTVQG). The Cytoplasmic segment spans residues 195 to 213 (PARALLADLSGPDQCNSAN). Residues 214-234 (AIFCTWMAVGNVLGFSSGASG) traverse the membrane as a helical segment. Topologically, residues 235–256 (NWHKWFPFLMTRACCEACSNLK) are extracellular. A helical transmembrane segment spans residues 257-277 (AAFLVAVVFLLFCMSVTLYFA). Residues 278-365 (EEIPLEPTDA…LTSMRHLPPG (88 aa)) are Cytoplasmic-facing. The tract at residues 291-340 (SDSAPLLNGSRDDNNASNEPRNGALPNGHTDGSNVPANSNAEDSNSNREN) is disordered. The segment covering 320 to 334 (TDGSNVPANSNAEDS) has biased composition (polar residues). Residues 366 to 386 (MYSVLLVMALTWLSWFPFFLF) form a helical membrane-spanning segment. At 387 to 417 (DTDWMGREVYHGDPNGNLSERKAYDNGVREG) the chain is on the extracellular side. N-linked (GlcNAc...) asparagine glycosylation occurs at Asn-403. The chain crosses the membrane as a helical span at residues 418–438 (AFGLLLNSVVLGIGSFLVDPL). Topologically, residues 439–447 (CRLMGARLV) are cytoplasmic. The chain crosses the membrane as a helical span at residues 448–468 (WAISNFTVFICMLATAILSWI). At 469 to 491 (SFDLYSSKLHHIIGANKTVKNSA) the chain is on the extracellular side. The N-linked (GlcNAc...) asparagine glycan is linked to Asn-484. Residues 492 to 512 (LIVFSLLGLPLSITYSVPFSV) form a helical membrane-spanning segment. The Cytoplasmic segment spans residues 513–525 (TAELTAGTGGGQG). Residues 526-546 (LATGVLNLAIVVPQIVVSLGA) form a helical membrane-spanning segment. The Extracellular portion of the chain corresponds to 547 to 556 (GPWDALFGGG). A helical membrane pass occupies residues 557-577 (NVPAFALASVFSLGAGVLAVL). The Cytoplasmic portion of the chain corresponds to 578-595 (KLPKLPNSYRSAGFHGFG).

It belongs to the glycoside-pentoside-hexuronide (GPH) cation symporter transporter (TC 2.A.2.4) family. In terms of assembly, homodimer.

It localises to the cell membrane. Its pathway is glycan biosynthesis; sucrose metabolism. In terms of biological role, responsible for the transport of sucrose into the cell, with the concomitant uptake of protons (symport system). May also transport other glucosides. This is Sucrose transport protein SUT4 (SUT4) from Oryza sativa subsp. indica (Rice).